A 1391-amino-acid chain; its full sequence is Periaxin (1391 aa).

Residue S7 is modified to Phosphoserine. Residues 16 to 99 form the PDZ domain; it reads LVEIIVETEA…YKVSFCLKRT (84 aa). The Nuclear export signal motif lies at 70–84; sequence VFFENFKYEDALRLL. The Nuclear localization signal signature appears at 118–196; that stretch reads KGPRAKVAKL…RLQLPRLRVR (79 aa). At S243 the chain carries Phosphoserine. A run of 12 repeats spans residues 432–436, 440–444, 448–452, 456–460, 464–468, 469–473, 474–478, 482–486, 487–491, 495–499, 500–504, and 508–512. Positions 432–719 are 45 X 5 AA approximate tandem repeats of [LVMGIED]-[PQSKHARMI]-[EDKLVTR]-[LIVMAP]-[AQKHRPEVSD]; that may have a tripeptide spacer of [LVIDEA]-[PMSVI]-[KEATDQ]; it reads GPEVKAPTGP…MQVSQVPEVQ (288 aa). The 13; approximate repeat unit spans residues 513 to 517; that stretch reads WPEMA. Tandem repeats lie at residues 521 to 525, 526 to 530, 534 to 538, 539 to 543, 547 to 551, 552 to 556, 560 to 564, 565 to 569, 573 to 577, 578 to 582, 583 to 587, 591 to 595, 596 to 600, 601 to 605, 609 to 613, 614 to 618, 619 to 623, 627 to 631, 632 to 636, 637 to 641, 645 to 649, 650 to 654, 655 to 659, 663 to 667, 671 to 675, 676 to 680, 684 to 688, 689 to 693, 697 to 701, 702 to 706, 707 to 711, and 715 to 719. A phosphoserine mark is found at S848, S979, S1028, S1279, S1283, S1285, S1293, S1331, and S1337. The tract at residues 1267–1366 is disordered; the sequence is LPRVGFSQSE…DREEGGFRVR (100 aa). The segment covering 1275–1285 has biased composition (low complexity); the sequence is SESVSGEGSPS. The segment covering 1354-1363 has biased composition (basic and acidic residues); sequence GSRDREEGGF. Position 1369 is a phosphoserine (S1369).

The protein belongs to the periaxin family. As to quaternary structure, homodimer (via PDZ domain). Interacts with SCN10A. Found in a complex with SCN10A. Interacts with DRP2. Identified in a dystroglycan complex that contains at least PRX, DRP2, UTRN, DMD and DAG1. Detected in a complex composed of at least EZR, AHNAK, PPL and PRX. Identified in a complex with EZR, AHNAK, BFSP1, BFSP2, ANK2, PLEC, VIM and spectrin. In terms of tissue distribution, detected in myelinating Schwann cells in intramuscular nerves in triangularis sterni. Detected in sciatic nerve. Detected in eye lens fiber cells. Isoform 1 is detected in myelinating Schwann cells in sciatic nerve. Isoform 2 is detected in myelinating Schwann cells in sciatic nerve (at protein level). Detected in sciatic nerve.

Its subcellular location is the cell membrane. The protein localises to the cell junction. It is found in the nucleus. It localises to the cytoplasm. In terms of biological role, scaffolding protein that functions as part of a dystroglycan complex in Schwann cells, and as part of EZR and AHNAK-containing complexes in eye lens fiber cells. Required for the maintenance of the peripheral myelin sheath that is essential for normal transmission of nerve impulses and normal perception of sensory stimuli. Required for normal transport of MBP mRNA from the perinuclear to the paranodal regions. Required for normal remyelination after nerve injury. Required for normal elongation of Schwann cells and normal length of the internodes between the nodes of Ranvier. The demyelinated nodes of Ranvier permit saltatory transmission of nerve impulses; shorter internodes cause slower transmission of nerve impulses. Required for the formation of appositions between the abaxonal surface of the myelin sheath and the Schwann cell plasma membrane; the Schwann cell cytoplasm is restricted to regions between these appositions. Required for the formation of Cajal bands and of Schmidt-Lanterman incisures that correspond to short, cytoplasm-filled regions on myelinated nerves. Recruits DRP2 to the Schwann cell plasma membrane. Required for normal protein composition of the eye lens fiber cell plasma membrane and normal eye lens fiber cell morphology. The protein is Periaxin (Prx) of Mus musculus (Mouse).